Consider the following 77-residue polypeptide: Large ribosomal subunit protein bL28 (77 aa).

This sequence belongs to the bacterial ribosomal protein bL28 family.

In Leptothrix cholodnii (strain ATCC 51168 / LMG 8142 / SP-6) (Leptothrix discophora (strain SP-6)), this protein is Large ribosomal subunit protein bL28.